A 216-amino-acid polypeptide reads, in one-letter code: Type-4 uracil-DNA glycosylase (216 aa).

[4Fe-4S] cluster-binding residues include C14 and C17. Residues 41–43 (GEA), F55, and N82 each bind uracil. Residues C86 and C102 each coordinate [4Fe-4S] cluster. Position 164 (H164) interacts with uracil.

The protein belongs to the uracil-DNA glycosylase (UDG) superfamily. Type 4 (UDGa) family. In terms of assembly, interacts with the sliding clamp PCNA3 subunit.

The catalysed reaction is Hydrolyzes single-stranded DNA or mismatched double-stranded DNA and polynucleotides, releasing free uracil.. Removes uracil bases that are present in DNA as a result of either deamination of cytosine or misincorporation of dUMP instead of dTMP. Can remove uracil from double-stranded DNA containing either a U/G or U/A base pair as well as from single-stranded DNA. The protein is Type-4 uracil-DNA glycosylase of Saccharolobus solfataricus (strain ATCC 35092 / DSM 1617 / JCM 11322 / P2) (Sulfolobus solfataricus).